The sequence spans 279 residues: Proteasome subunit beta (279 aa).

The propeptide at 1–51 is removed in mature form; by autocatalysis; that stretch reads MTFDASGRLPEAFLTPGGSSFMDFLAGHAPDLLPGRRSLGTGDLSKDVPHG. The active-site Nucleophile is Thr52.

It belongs to the peptidase T1B family. As to quaternary structure, the 20S proteasome core is composed of 14 alpha and 14 beta subunits that assemble into four stacked heptameric rings, resulting in a barrel-shaped structure. The two inner rings, each composed of seven catalytic beta subunits, are sandwiched by two outer rings, each composed of seven alpha subunits. The catalytic chamber with the active sites is on the inside of the barrel. Has a gated structure, the ends of the cylinder being occluded by the N-termini of the alpha-subunits. Is capped by the proteasome-associated ATPase, ARC.

The protein resides in the cytoplasm. It catalyses the reaction Cleavage of peptide bonds with very broad specificity.. Its pathway is protein degradation; proteasomal Pup-dependent pathway. Its activity is regulated as follows. The formation of the proteasomal ATPase ARC-20S proteasome complex, likely via the docking of the C-termini of ARC into the intersubunit pockets in the alpha-rings, may trigger opening of the gate for substrate entry. Interconversion between the open-gate and close-gate conformations leads to a dynamic regulation of the 20S proteasome proteolysis activity. Component of the proteasome core, a large protease complex with broad specificity involved in protein degradation. The sequence is that of Proteasome subunit beta from Kribbella flavida (strain DSM 17836 / JCM 10339 / NBRC 14399).